Here is a 436-residue protein sequence, read N- to C-terminus: Carboxypeptidase A5 (436 aa).

A signal peptide spans 1 to 33 (MQGTPAGGTSPGPSPMDRQTLLVFSLILAAALG). A propeptide spans 34-126 (QMNFTGDQVL…EREAMAKSRR (93 aa)) (activation peptide). The Peptidase M14 domain maps to 138 to 431 (SYHTLEEISS…MALRTIMEHT (294 aa)). Zn(2+)-binding residues include H196 and E199. Residues 196-199 (HSRE), R254, and 271-272 (NR) each bind substrate. A disulfide bridge connects residues C265 and C288. Residue H323 participates in Zn(2+) binding. Substrate-binding positions include 324–325 (SY) and Y375. The active-site Proton donor/acceptor is the E397.

The protein belongs to the peptidase M14 family. Zn(2+) serves as cofactor.

It localises to the secreted. This is Carboxypeptidase A5 (CPA5) from Macaca fascicularis (Crab-eating macaque).